Consider the following 314-residue polypeptide: Porphobilinogen deaminase (314 aa).

Cysteine 242 is subject to S-(dipyrrolylmethanemethyl)cysteine.

This sequence belongs to the HMBS family. Monomer. Dipyrromethane is required as a cofactor.

It catalyses the reaction 4 porphobilinogen + H2O = hydroxymethylbilane + 4 NH4(+). The protein operates within porphyrin-containing compound metabolism; protoporphyrin-IX biosynthesis; coproporphyrinogen-III from 5-aminolevulinate: step 2/4. Its function is as follows. Tetrapolymerization of the monopyrrole PBG into the hydroxymethylbilane pre-uroporphyrinogen in several discrete steps. The polypeptide is Porphobilinogen deaminase (hemC) (Buchnera aphidicola subsp. Acyrthosiphon pisum (strain APS) (Acyrthosiphon pisum symbiotic bacterium)).